The sequence spans 343 residues: L-threonine 3-dehydrogenase (343 aa).

Cysteine 38 serves as a coordination point for Zn(2+). Active-site charge relay system residues include threonine 40 and histidine 43. Residues histidine 63, glutamate 64, cysteine 93, cysteine 96, cysteine 99, and cysteine 107 each coordinate Zn(2+). Residues isoleucine 176, aspartate 196, arginine 201, 261–263 (LGI), and 286–288 (IAG) each bind NAD(+).

It belongs to the zinc-containing alcohol dehydrogenase family. Homotetramer. The cofactor is Zn(2+).

It is found in the cytoplasm. It catalyses the reaction L-threonine + NAD(+) = (2S)-2-amino-3-oxobutanoate + NADH + H(+). Its pathway is amino-acid degradation; L-threonine degradation via oxydo-reductase pathway; glycine from L-threonine: step 1/2. Catalyzes the NAD(+)-dependent oxidation of L-threonine to 2-amino-3-ketobutyrate. The protein is L-threonine 3-dehydrogenase of Thermus thermophilus (strain ATCC 27634 / DSM 579 / HB8).